A 534-amino-acid polypeptide reads, in one-letter code: Sodium-dependent lysophosphatidylcholine symporter 1 (534 aa).

At 1 to 39 (MAKGEGAESGSAAGLLPTSILQASERPVQVKKEPKKKQQ) the chain is on the cytoplasmic side. A helical transmembrane segment spans residues 40 to 69 (LSICNKLCYAVGGAPYQLTGCALGFFLQIY). Topologically, residues 70–80 (LLDVAKVEPLP) are extracellular. The chain crosses the membrane as a helical span at residues 81-101 (ASIILFVGRAWDAFTDPLVGF). The Cytoplasmic portion of the chain corresponds to 102–113 (CISKSSWTRLGR). The chain crosses the membrane as a helical span at residues 114-133 (LMPWIIFSTPLAIIAYFLIW). Over 134-148 (FVPDFPSGTESSHGF) the chain is Extracellular. A helical membrane pass occupies residues 149–173 (LWYLLFYCLFETLVTCFHVPYSALT). Residues 174 to 180 (MFISTEQ) are Cytoplasmic-facing. A helical membrane pass occupies residues 181–212 (SERDSATAYRMTVEVLGTVIGTAIQGQIVGQA). The Extracellular portion of the chain corresponds to 213-232 (KAPCLQDQNGSVVVSEVANR). Residues C216 and C464 are joined by a disulfide bond. N-linked (GlcNAc...) asparagine glycans are attached at residues N221 and N231. A helical transmembrane segment spans residues 233 to 266 (TQSTASLKDTQNAYLLAAGIIASIYVLCAFILIL). Residues 267–297 (GVREQRELYESQQAESMPFFQGLRLVMGHGP) lie on the Cytoplasmic side of the membrane. Residues 298-324 (YVKLIAGFLFTSLAFMLVEGNFALFCT) traverse the membrane as a helical segment. Residues 325–335 (YTLDFRNEFQN) lie on the Extracellular side of the membrane. Residues 336-354 (LLLAIMLSATFTIPIWQWF) form a helical membrane-spanning segment. Residues 355-358 (LTRF) lie on the Cytoplasmic side of the membrane. Residues 359-380 (GKKTAVYIGISSAVPFLILVAL) form a helical membrane-spanning segment. At 381–383 (MER) the chain is on the extracellular side. The helical transmembrane segment at 384 to 420 (NLIVTYVVAVAAGVSVAAAFLLPWSMLPDVIDDFHLK) threads the bilayer. The Cytoplasmic segment spans residues 421–430 (HPHSPGTEPI). A helical transmembrane segment spans residues 431–457 (FFSFYVFFTKFASGVSLGVSTLSLDFA). Over 458-469 (NYQRQGCSQPEQ) the chain is Extracellular. A helical membrane pass occupies residues 470 to 493 (VKFTLKMLVTMAPIILILLGLLLF). At 494-534 (KLYPIDEEKRRQNKKALQALREEASSSGCSDTDSTELASIL) the chain is on the cytoplasmic side.

Belongs to the major facilitator superfamily. In terms of processing, N-glycosylated. In terms of tissue distribution, widely expressed. Exhibits an oscillatory pattern of expression in brown adipose tissue and liver consistent with a circadian rhythm. Enriched in brain micro-vessels, where it is specifically present in endothelium constituting the blood-brain barrier (at protein level).

It localises to the cell membrane. Its subcellular location is the endoplasmic reticulum membrane. The catalysed reaction is a 1-acyl-sn-glycero-3-phosphocholine(in) + Na(+)(in) = a 1-acyl-sn-glycero-3-phosphocholine(out) + Na(+)(out). The enzyme catalyses 1-(4Z,7Z,10Z,13Z,16Z,19Z-docosahexaenoyl)-sn-glycero-3-phosphocholine(in) + Na(+)(in) = 1-(4Z,7Z,10Z,13Z,16Z,19Z-docosahexaenoyl)-sn-glycero-3-phosphocholine(out) + Na(+)(out). It catalyses the reaction 1-(9Z-octadecenoyl)-sn-glycero-3-phosphocholine(in) + Na(+)(in) = 1-(9Z-octadecenoyl)-sn-glycero-3-phosphocholine(out) + Na(+)(out). It carries out the reaction 1-hexadecanoyl-sn-glycero-3-phosphocholine(in) + Na(+)(in) = 1-hexadecanoyl-sn-glycero-3-phosphocholine(out) + Na(+)(out). The catalysed reaction is a 1-acyl-sn-glycero-3-phosphoethanolamine(in) + Na(+)(in) = a 1-acyl-sn-glycero-3-phosphoethanolamine(out) + Na(+)(out). In terms of biological role, sodium-dependent lysophosphatidylcholine (LPC) symporter, which plays an essential role for blood-brain barrier formation and function. Specifically expressed in endothelium of the blood-brain barrier of micro-vessels and transports LPC into the brain. Transport of LPC is essential because it constitutes the major mechanism by which docosahexaenoic acid (DHA), an omega-3 fatty acid that is essential for normal brain growth and cognitive function, enters the brain. Transports LPC carrying long-chain fatty acids such LPC oleate and LPC palmitate with a minimum acyl chain length of 14 carbons. Does not transport docosahexaenoic acid in unesterified fatty acid. Not required for central nervous system vascular morphogenesis. This is Sodium-dependent lysophosphatidylcholine symporter 1 from Mus musculus (Mouse).